Reading from the N-terminus, the 350-residue chain is Transmembrane protein 185A (350 aa).

A run of 7 helical transmembrane segments spans residues 16–36 (LIYA…DGII), 41–61 (WAVF…ASVG), 81–101 (FKAM…EVLV), 111–131 (FWLL…AACV), 177–197 (ILMS…VLFL), 211–231 (ITMA…EILL), and 240–260 (AFSC…LMAT). The mediates interaction with MAP1B stretch occupies residues 298–350 (DLHHEDNEETEETPVPEPPKIAPMFRKKARVVITQSPGKYALPPPKLNIEMPD).

This sequence belongs to the TMEM185 family. Interacts with MAP1B.

The protein resides in the cell projection. It localises to the dendrite. It is found in the membrane. In Pongo abelii (Sumatran orangutan), this protein is Transmembrane protein 185A (TMEM185A).